The sequence spans 128 residues: Aspartate 1-decarboxylase (128 aa).

Ser25 serves as the catalytic Schiff-base intermediate with substrate; via pyruvic acid. Ser25 carries the pyruvic acid (Ser) modification. Thr57 is a substrate binding site. Tyr58 serves as the catalytic Proton donor. Gly73–Ala75 contacts substrate.

The protein belongs to the PanD family. In terms of assembly, heterooctamer of four alpha and four beta subunits. Requires pyruvate as cofactor. Is synthesized initially as an inactive proenzyme, which is activated by self-cleavage at a specific serine bond to produce a beta-subunit with a hydroxyl group at its C-terminus and an alpha-subunit with a pyruvoyl group at its N-terminus.

The protein resides in the cytoplasm. It carries out the reaction L-aspartate + H(+) = beta-alanine + CO2. It participates in cofactor biosynthesis; (R)-pantothenate biosynthesis; beta-alanine from L-aspartate: step 1/1. Functionally, catalyzes the pyruvoyl-dependent decarboxylation of aspartate to produce beta-alanine. The chain is Aspartate 1-decarboxylase from Paraburkholderia xenovorans (strain LB400).